Reading from the N-terminus, the 272-residue chain is tRNA pseudouridine synthase A (272 aa).

The active-site Nucleophile is Asp-51. Position 109 (Tyr-109) interacts with substrate.

It belongs to the tRNA pseudouridine synthase TruA family. As to quaternary structure, homodimer.

The enzyme catalyses uridine(38/39/40) in tRNA = pseudouridine(38/39/40) in tRNA. In terms of biological role, formation of pseudouridine at positions 38, 39 and 40 in the anticodon stem and loop of transfer RNAs. The sequence is that of tRNA pseudouridine synthase A from Verminephrobacter eiseniae (strain EF01-2).